Reading from the N-terminus, the 211-residue chain is Thymidylate kinase (211 aa).

Glycine 7 to serine 14 is an ATP binding site.

The protein belongs to the thymidylate kinase family.

It carries out the reaction dTMP + ATP = dTDP + ADP. In terms of biological role, phosphorylation of dTMP to form dTDP in both de novo and salvage pathways of dTTP synthesis. The chain is Thymidylate kinase from Mesomycoplasma hyopneumoniae (strain 7448) (Mycoplasma hyopneumoniae).